A 278-amino-acid polypeptide reads, in one-letter code: Transmembrane protein 45B (278 aa).

7 consecutive transmembrane segments (helical) span residues 7–27, 49–69, 95–115, 117–137, 149–169, 183–203, and 215–235; these read HALP…KYPL, IIEG…EQFV, YLFF…FHIV, LGLD…LFYF, IHSL…LEVI, LLIL…PPFG, and IMFI…IVAI. Phosphoserine occurs at positions 273 and 275.

Belongs to the TMEM45 family.

The protein localises to the endosome membrane. Its subcellular location is the lysosome membrane. It is found in the golgi apparatus. It localises to the trans-Golgi network membrane. Plays a role in innate immunity. This Mus musculus (Mouse) protein is Transmembrane protein 45B (Tmem45b).